A 212-amino-acid polypeptide reads, in one-letter code: FMN-dependent NADH:quinone oxidoreductase 1 (212 aa).

Residues Ser-10, 16–18 (SHS), 97–100 (MYNF), and 145–148 (SRGG) contribute to the FMN site.

This sequence belongs to the azoreductase type 1 family. Homodimer. FMN serves as cofactor.

The enzyme catalyses 2 a quinone + NADH + H(+) = 2 a 1,4-benzosemiquinone + NAD(+). The catalysed reaction is N,N-dimethyl-1,4-phenylenediamine + anthranilate + 2 NAD(+) = 2-(4-dimethylaminophenyl)diazenylbenzoate + 2 NADH + 2 H(+). Functionally, quinone reductase that provides resistance to thiol-specific stress caused by electrophilic quinones. Its function is as follows. Also exhibits azoreductase activity. Catalyzes the reductive cleavage of the azo bond in aromatic azo compounds to the corresponding amines. This chain is FMN-dependent NADH:quinone oxidoreductase 1, found in Pseudomonas fluorescens (strain Pf0-1).